A 228-amino-acid polypeptide reads, in one-letter code: Small ribosomal subunit protein uS3 (228 aa).

One can recognise a KH type-2 domain in the interval 39–107 (VREYLQDKLK…PVHINIEEIR (69 aa)).

This sequence belongs to the universal ribosomal protein uS3 family. As to quaternary structure, part of the 30S ribosomal subunit. Forms a tight complex with proteins S10 and S14.

Functionally, binds the lower part of the 30S subunit head. Binds mRNA in the 70S ribosome, positioning it for translation. The protein is Small ribosomal subunit protein uS3 of Pseudomonas aeruginosa (strain UCBPP-PA14).